A 446-amino-acid chain; its full sequence is Na(+)-translocating NADH-quinone reductase subunit A (446 aa).

The protein belongs to the NqrA family. Composed of six subunits; NqrA, NqrB, NqrC, NqrD, NqrE and NqrF.

The catalysed reaction is a ubiquinone + n Na(+)(in) + NADH + H(+) = a ubiquinol + n Na(+)(out) + NAD(+). Functionally, NQR complex catalyzes the reduction of ubiquinone-1 to ubiquinol by two successive reactions, coupled with the transport of Na(+) ions from the cytoplasm to the periplasm. NqrA to NqrE are probably involved in the second step, the conversion of ubisemiquinone to ubiquinol. This is Na(+)-translocating NADH-quinone reductase subunit A from Histophilus somni (strain 2336) (Haemophilus somnus).